The following is a 278-amino-acid chain: Phosphatidylglycerol--prolipoprotein diacylglyceryl transferase (278 aa).

The next 4 membrane-spanning stretches (helical) occupy residues 17-37 (LAVR…ILLG), 57-77 (ALFY…VLFY), 89-109 (ILAI…VAIA), and 119-139 (LSWL…LGAG). Arginine 140 serves as a coordination point for a 1,2-diacyl-sn-glycero-3-phospho-(1'-sn-glycerol). The next 3 membrane-spanning stretches (helical) occupy residues 174-194 (QLYE…LYSA), 200-220 (GAVT…CEFF), and 233-253 (LGIS…IALL).

This sequence belongs to the Lgt family.

It is found in the cell inner membrane. The catalysed reaction is L-cysteinyl-[prolipoprotein] + a 1,2-diacyl-sn-glycero-3-phospho-(1'-sn-glycerol) = an S-1,2-diacyl-sn-glyceryl-L-cysteinyl-[prolipoprotein] + sn-glycerol 1-phosphate + H(+). It participates in protein modification; lipoprotein biosynthesis (diacylglyceryl transfer). Functionally, catalyzes the transfer of the diacylglyceryl group from phosphatidylglycerol to the sulfhydryl group of the N-terminal cysteine of a prolipoprotein, the first step in the formation of mature lipoproteins. This is Phosphatidylglycerol--prolipoprotein diacylglyceryl transferase from Nitrosomonas europaea (strain ATCC 19718 / CIP 103999 / KCTC 2705 / NBRC 14298).